The chain runs to 244 residues: Small ribosomal subunit protein uS2 (244 aa).

Belongs to the universal ribosomal protein uS2 family.

In Buchnera aphidicola subsp. Schizaphis graminum (strain Sg), this protein is Small ribosomal subunit protein uS2.